The sequence spans 383 residues: MKNKLPPFIEIYRALIATPSISATEEALDQSNADLITLLADWFKDLGFNVEVQPVPGTRNKFNMLASYGQGAGGLLLAGHTDTVPFDDGRWTRDPFTLTEHDGKLYGLGTADMKGFFAFILDALRDVDVTKLKKPLYILATADEETSMAGARYFAETTALRPDCAIIGEPTSLQPVRAHKGHISNAIRIQGQSGHSSDPARGINAIELMHDAIGHILQLRDNLKERYHYEAFTVPYPTLNLGHIHGGDASNRICACCELHMDIRPQPGMTLNELNGLLNDALAPVSERWPGRLTVDELHPPIPGYECPPNHQLVEVVEKLLGAKTEVVNYCTEAPFIQTLCPTLVLGPGSINQAHQPDEYLETRFIKPTRELIIQVIHHFCWH.

Residue His80 participates in Zn(2+) binding. Asp82 is an active-site residue. Asp112 is a Zn(2+) binding site. Glu144 is a catalytic residue. Zn(2+) is bound by residues Glu145, Glu169, and His355.

Belongs to the peptidase M20A family. ArgE subfamily. In terms of assembly, homodimer. Zn(2+) serves as cofactor. Requires Co(2+) as cofactor. It depends on glutathione as a cofactor.

The protein localises to the cytoplasm. It catalyses the reaction N(2)-acetyl-L-ornithine + H2O = L-ornithine + acetate. It functions in the pathway amino-acid biosynthesis; L-arginine biosynthesis; L-ornithine from N(2)-acetyl-L-ornithine (linear): step 1/1. Catalyzes the hydrolysis of the amide bond of N(2)-acetylated L-amino acids. Cleaves the acetyl group from N-acetyl-L-ornithine to form L-ornithine, an intermediate in L-arginine biosynthesis pathway, and a branchpoint in the synthesis of polyamines. The polypeptide is Acetylornithine deacetylase (Shigella flexneri).